We begin with the raw amino-acid sequence, 232 residues long: Phycobilisome rod-core linker polypeptide cpcG (232 aa).

The region spanning 11-191 is the PBS-linker domain; that stretch reads STQNQRVDGY…PRYGADFKEK (181 aa).

Belongs to the phycobilisome linker protein family. The phycobilisome is a hemidiscoidal structure that is composed of two distinct substructures: a core complex and a number of rods radiating from the core.

It is found in the plastid. It localises to the chloroplast. The protein resides in the chloroplast thylakoid membrane. Rod-core linker protein required for attachment of phycocyanin to allophycocyanin in cores of phycobilisomes. Functionally, linker polypeptides determine the state of aggregation and the location of the disk-shaped phycobiliprotein units within the phycobilisome and modulate their spectroscopic properties in order to mediate a directed and optimal energy transfer. In Pyropia yezoensis (Susabi-nori), this protein is Phycobilisome rod-core linker polypeptide cpcG (cpcG).